Here is a 472-residue protein sequence, read N- to C-terminus: Flap endonuclease 1 (472 aa).

Residues Met-1–Arg-106 form an N-domain region. Residue Asp-34 participates in Mg(2+) binding. DNA is bound by residues Arg-47 and Arg-72. 5 residues coordinate Mg(2+): Asp-88, Glu-160, Glu-162, Asp-181, and Asp-183. The interval Thr-124–His-263 is I-domain. Glu-160 serves as a coordination point for DNA. Residues Gly-241 and Asp-243 each contribute to the DNA site. Asp-243 contributes to the Mg(2+) binding site. Positions Ala-348–Phe-356 are interaction with PCNA.

The protein belongs to the XPG/RAD2 endonuclease family. FEN1 subfamily. As to quaternary structure, interacts with PCNA. Three molecules of FEN1 bind to one PCNA trimer with each molecule binding to one PCNA monomer. PCNA stimulates the nuclease activity without altering cleavage specificity. It depends on Mg(2+) as a cofactor. In terms of processing, phosphorylated. Phosphorylation upon DNA damage induces relocalization to the nuclear plasma.

It localises to the nucleus. The protein resides in the nucleolus. Its subcellular location is the nucleoplasm. The protein localises to the mitochondrion. Functionally, structure-specific nuclease with 5'-flap endonuclease and 5'-3' exonuclease activities involved in DNA replication and repair. During DNA replication, cleaves the 5'-overhanging flap structure that is generated by displacement synthesis when DNA polymerase encounters the 5'-end of a downstream Okazaki fragment. It enters the flap from the 5'-end and then tracks to cleave the flap base, leaving a nick for ligation. Also involved in the long patch base excision repair (LP-BER) pathway, by cleaving within the apurinic/apyrimidinic (AP) site-terminated flap. Acts as a genome stabilization factor that prevents flaps from equilibrating into structures that lead to duplications and deletions. Also possesses 5'-3' exonuclease activity on nicked or gapped double-stranded DNA, and exhibits RNase H activity. Also involved in replication and repair of rDNA and in repairing mitochondrial DNA. This Cryptosporidium muris (strain RN66) protein is Flap endonuclease 1.